The sequence spans 373 residues: Dual-specificity RNA methyltransferase RlmN (373 aa).

Residue Glu91 is the Proton acceptor of the active site. The region spanning 97-339 (EDDRGTLCIS…TTVRKTRGDD (243 aa)) is the Radical SAM core domain. Cys104 and Cys344 are disulfide-bonded. Positions 111, 115, and 118 each coordinate [4Fe-4S] cluster. Residues 165 to 166 (GE), Ser197, 219 to 221 (SLH), and Asn301 contribute to the S-adenosyl-L-methionine site. The active-site S-methylcysteine intermediate is Cys344.

It belongs to the radical SAM superfamily. RlmN family. The cofactor is [4Fe-4S] cluster.

It localises to the cytoplasm. It catalyses the reaction adenosine(2503) in 23S rRNA + 2 reduced [2Fe-2S]-[ferredoxin] + 2 S-adenosyl-L-methionine = 2-methyladenosine(2503) in 23S rRNA + 5'-deoxyadenosine + L-methionine + 2 oxidized [2Fe-2S]-[ferredoxin] + S-adenosyl-L-homocysteine. The catalysed reaction is adenosine(37) in tRNA + 2 reduced [2Fe-2S]-[ferredoxin] + 2 S-adenosyl-L-methionine = 2-methyladenosine(37) in tRNA + 5'-deoxyadenosine + L-methionine + 2 oxidized [2Fe-2S]-[ferredoxin] + S-adenosyl-L-homocysteine. Functionally, specifically methylates position 2 of adenine 2503 in 23S rRNA and position 2 of adenine 37 in tRNAs. m2A2503 modification seems to play a crucial role in the proofreading step occurring at the peptidyl transferase center and thus would serve to optimize ribosomal fidelity. The sequence is that of Dual-specificity RNA methyltransferase RlmN from Paracidovorax citrulli (strain AAC00-1) (Acidovorax citrulli).